Reading from the N-terminus, the 571-residue chain is Septation ring formation regulator EzrA (571 aa).

The Extracellular portion of the chain corresponds to 1 to 3; the sequence is MYY. The chain crosses the membrane as a helical span at residues 4–22; sequence MLIGFIIVVIAVISAGYIL. Residues 23–571 lie on the Cytoplasmic side of the membrane; the sequence is KRKHYQRINE…ESKVSVDDIE (549 aa). Coiled-coil stretches lie at residues 170–215, 248–299, 326–374, 400–437, and 478–529; these read EAKL…QMER, LAQM…TLEH, DALA…ASGE, NFAE…ERER, and RIAE…ENHF.

This sequence belongs to the EzrA family.

Its subcellular location is the cell membrane. Its function is as follows. Negative regulator of FtsZ ring formation; modulates the frequency and position of FtsZ ring formation. Inhibits FtsZ ring formation at polar sites. Interacts either with FtsZ or with one of its binding partners to promote depolymerization. The protein is Septation ring formation regulator EzrA of Listeria innocua serovar 6a (strain ATCC BAA-680 / CLIP 11262).